A 272-amino-acid polypeptide reads, in one-letter code: uncharacterized protein (272 aa).

2 helical membrane passes run 9–29 (GGDI…ASEH) and 252–272 (SHIS…ISFI).

It is found in the membrane. This is an uncharacterized protein from Caenorhabditis elegans.